The following is a 142-amino-acid chain: Ribosomal RNA large subunit methyltransferase H (142 aa).

Residue Gly-89 coordinates S-adenosyl-L-methionine.

This sequence belongs to the RNA methyltransferase RlmH family. In terms of assembly, homodimer.

It localises to the cytoplasm. It carries out the reaction pseudouridine(1915) in 23S rRNA + S-adenosyl-L-methionine = N(3)-methylpseudouridine(1915) in 23S rRNA + S-adenosyl-L-homocysteine + H(+). Its function is as follows. Specifically methylates the pseudouridine at position 1915 (m3Psi1915) in 23S rRNA. In Zymomonas mobilis subsp. mobilis (strain ATCC 31821 / ZM4 / CP4), this protein is Ribosomal RNA large subunit methyltransferase H.